A 157-amino-acid chain; its full sequence is Small ribosomal subunit protein uS7 (157 aa).

Belongs to the universal ribosomal protein uS7 family. Part of the 30S ribosomal subunit. Contacts proteins S9 and S11.

One of the primary rRNA binding proteins, it binds directly to 16S rRNA where it nucleates assembly of the head domain of the 30S subunit. Is located at the subunit interface close to the decoding center, probably blocks exit of the E-site tRNA. This is Small ribosomal subunit protein uS7 from Herpetosiphon aurantiacus (strain ATCC 23779 / DSM 785 / 114-95).